Consider the following 281-residue polypeptide: Pantothenate synthetase (281 aa).

30–37 serves as a coordination point for ATP; sequence MGNLHQGH. The active-site Proton donor is His-37. Gln-61 contacts (R)-pantoate. Position 61 (Gln-61) interacts with beta-alanine. An ATP-binding site is contributed by 149–152; it reads GNKD. Gln-155 is a binding site for (R)-pantoate. ATP-binding positions include Ile-178 and 186 to 189; that span reads MSSR.

The protein belongs to the pantothenate synthetase family. As to quaternary structure, homodimer.

It is found in the cytoplasm. The enzyme catalyses (R)-pantoate + beta-alanine + ATP = (R)-pantothenate + AMP + diphosphate + H(+). It functions in the pathway cofactor biosynthesis; (R)-pantothenate biosynthesis; (R)-pantothenate from (R)-pantoate and beta-alanine: step 1/1. Its function is as follows. Catalyzes the condensation of pantoate with beta-alanine in an ATP-dependent reaction via a pantoyl-adenylate intermediate. This is Pantothenate synthetase from Shewanella baltica (strain OS223).